The following is a 170-amino-acid chain: uncharacterized protein (170 aa).

Its subcellular location is the mitochondrion. This is an uncharacterized protein from Arabidopsis thaliana (Mouse-ear cress).